Reading from the N-terminus, the 160-residue chain is Ureidoglycolate lyase (160 aa).

It belongs to the ureidoglycolate lyase family. As to quaternary structure, homodimer. The cofactor is Ni(2+).

It carries out the reaction (S)-ureidoglycolate = urea + glyoxylate. It participates in nitrogen metabolism; (S)-allantoin degradation. Functionally, catalyzes the catabolism of the allantoin degradation intermediate (S)-ureidoglycolate, generating urea and glyoxylate. Involved in the anaerobic utilization of allantoin as sole nitrogen source. Reinforces the induction of genes involved in the degradation of allantoin and glyoxylate by producing glyoxylate. This chain is Ureidoglycolate lyase, found in Shigella flexneri serotype 5b (strain 8401).